A 141-amino-acid polypeptide reads, in one-letter code: MFACAKLARTPALIRAGSRVAYRPISASVLSRPETRTGEGSTVFNGAQNGVCQLIRREFQTSVISRDIDTAAKFIGAGAATVGVAGSGAGIGTVFGSLIIGYARNPSLKQQLFSYAILGFALSEAMGLFCLMVAFLILFAM.

A mitochondrion-targeting transit peptide spans 1-66; sequence MFACAKLART…REFQTSVISR (66 aa). A helical transmembrane segment spans residues 82–102; sequence VGVAGSGAGIGTVFGSLIIGY. Lys-109 carries the N6,N6,N6-trimethyllysine modification. Residues 117-137 form a helical membrane-spanning segment; sequence ILGFALSEAMGLFCLMVAFLI.

It belongs to the ATPase C chain family. F-type ATPases have 2 components, CF(1) - the catalytic core - and CF(0) - the membrane proton channel. CF(1) has five subunits: alpha(3), beta(3), gamma(1), delta(1), epsilon(1). CF(0) has three main subunits: a, b and c. Interacts with TMEM70 and TMEM242. In terms of processing, trimethylated by ATPSCKMT at Lys-109. Methylation is required for proper incorporation of the C subunit into the ATP synthase complex and mitochondrial respiration.

The protein resides in the mitochondrion membrane. Its function is as follows. Mitochondrial membrane ATP synthase (F(1)F(0) ATP synthase or Complex V) produces ATP from ADP in the presence of a proton gradient across the membrane which is generated by electron transport complexes of the respiratory chain. F-type ATPases consist of two structural domains, F(1) - containing the extramembraneous catalytic core and F(0) - containing the membrane proton channel, linked together by a central stalk and a peripheral stalk. During catalysis, ATP synthesis in the catalytic domain of F(1) is coupled via a rotary mechanism of the central stalk subunits to proton translocation. Part of the complex F(0) domain. A homomeric c-ring of probably 10 subunits is part of the complex rotary element. The protein is ATP synthase F(0) complex subunit C3, mitochondrial of Mus musculus (Mouse).